We begin with the raw amino-acid sequence, 459 residues long: uncharacterized protein (459 aa).

Residues 6-64 (KNKQEKNIIITIKRLGINGEGIGYYKKKIIFIPGALPNEVVVAKIVDRHPHYLEGELVR) enclose the TRAM domain. 4 residues coordinate S-adenosyl-L-methionine: Q289, Y318, E339, and D387. C414 functions as the Nucleophile in the catalytic mechanism.

The protein belongs to the class I-like SAM-binding methyltransferase superfamily. RNA M5U methyltransferase family.

This is an uncharacterized protein from Lactobacillus johnsonii (strain CNCM I-12250 / La1 / NCC 533).